The chain runs to 372 residues: 7-methylxanthosine synthase 1 (372 aa).

Y18 serves as a coordination point for S-adenosyl-L-homocysteine. Xanthosine-binding residues include N21 and N25. 7 residues coordinate S-adenosyl-L-homocysteine: C62, N67, D101, L102, S140, F141, and C157. Y158 serves as a coordination point for xanthosine. C159 contacts S-adenosyl-L-homocysteine. Positions 161 and 162 each coordinate xanthosine. Mg(2+) contacts are provided by N179, D261, F263, and N264. S316, Y321, and Y356 together coordinate xanthosine.

The protein belongs to the methyltransferase superfamily. Type-7 methyltransferase family. Mg(2+) serves as cofactor. As to expression, expressed in stems, young leaves, floral buds, developing endosperm and immature fruits (grains). Detected in roots and old leaves, but not in mature fruits.

It carries out the reaction xanthosine + S-adenosyl-L-methionine = 7-methylxanthosine + S-adenosyl-L-homocysteine. It functions in the pathway alkaloid biosynthesis. Its function is as follows. Involved in the biosynthesis of caffeine. Specific for xanthosine and could not use xanthosine 5'-monophosphate (XMP) as substrate. Catalyzes the 7-N-methylation activity of xanthosine, but does not have 1-N- or 3-N-methylation activity. The protein is 7-methylxanthosine synthase 1 of Coffea arabica (Arabian coffee).